Here is a 103-residue protein sequence, read N- to C-terminus: Large ribosomal subunit protein bL21 (103 aa).

The protein belongs to the bacterial ribosomal protein bL21 family. In terms of assembly, part of the 50S ribosomal subunit. Contacts protein L20.

This protein binds to 23S rRNA in the presence of protein L20. The protein is Large ribosomal subunit protein bL21 of Lactobacillus helveticus (strain DPC 4571).